The sequence spans 572 residues: MFS-type transporter pydD (572 aa).

Positions 1–15 (MLQEDKSSETMHDPS) are enriched in basic and acidic residues. Positions 1–46 (MLQEDKSSETMHDPSTRGVETRNVTAVDSPLETATTSESPETERTN) are disordered. The N-linked (GlcNAc...) asparagine glycan is linked to asparagine 23. A compositionally biased stretch (low complexity) spans 29 to 39 (SPLETATTSES). Transmembrane regions (helical) follow at residues 56–76 (FWAL…EGTI), 88–108 (LGGG…MTAM), 123–143 (WPML…GGAT), 156–176 (GIGA…VVPL), 185–205 (IVMG…GLIV), 212–232 (WTFY…FSFL), 255–275 (ALFV…GSVY), and 282–302 (VLVP…FEGS). N-linked (GlcNAc...) asparagine glycosylation occurs at asparagine 317. Transmembrane regions (helical) follow at residues 321 to 341 (VGVM…LYFM), 358 to 378 (VQIL…GFLM), 386 to 406 (PIHY…SLLD), 419 to 439 (IVYS…LLAP), 451 to 471 (TWSF…AAVF), and 529 to 549 (WLVS…AREV).

Belongs to the major facilitator superfamily.

Its subcellular location is the membrane. MFS-type transporter; part of the gene cluster that mediates the biosynthesis of pyrrocidines, fungal natural products containing a macrocyclic para-cyclophane connected to a decahydrofluorene ring system that show potent antibiotic activities toward Gram-negative bacteria. This Acremonium sp protein is MFS-type transporter pydD.